We begin with the raw amino-acid sequence, 604 residues long: Asparagine synthetase [glutamine-hydrolyzing] 1 (604 aa).

Catalysis depends on cysteine 2, which acts as the Nucleophile. Residues cysteine 2–glycine 186 enclose the Glutamine amidotransferase type-2 domain. Residues arginine 50 to valine 54, asparagine 75 to glutamate 77, and aspartate 99 contribute to the L-glutamine site. The Asparagine synthetase domain maps to leucine 211–lysine 451. ATP-binding positions include leucine 232, valine 268, and serine 342–glycine 343.

The enzyme catalyses L-aspartate + L-glutamine + ATP + H2O = L-asparagine + L-glutamate + AMP + diphosphate + H(+). Its pathway is amino-acid biosynthesis; L-asparagine biosynthesis. Functionally, essential for nitrogen assimilation, distribution and remobilization within the plant via the phloem. The sequence is that of Asparagine synthetase [glutamine-hydrolyzing] 1 from Oryza sativa subsp. japonica (Rice).